The sequence spans 223 residues: MDELKKLAGVTAAKYVKNGMIVGLGTGSTAYFFVEEIGRRVKEEGLQVVGVTTSNRTTEQARGLGIPLKSADDIDVIDVTVDGADEVDPDFNGIKGGGGALLMEKIVATPTKEYIWVVDESKLVETLGAFKLPVEVVRYGSERLFRVFKSKGYCPSFRETEGDRFITDMGNYIIDLDLKKIEDPKQLANELDHTVGVVEHGLFNGMVNKVIVAGKNGLDILEK.

Substrate contacts are provided by residues 26-29, 82-85, and 95-98; these read TGST, DGAD, and KGGG. The Proton acceptor role is filled by Glu104. Lys122 is a substrate binding site.

Belongs to the ribose 5-phosphate isomerase family. As to quaternary structure, homodimer.

The catalysed reaction is aldehydo-D-ribose 5-phosphate = D-ribulose 5-phosphate. The protein operates within carbohydrate degradation; pentose phosphate pathway; D-ribose 5-phosphate from D-ribulose 5-phosphate (non-oxidative stage): step 1/1. In terms of biological role, catalyzes the reversible conversion of ribose-5-phosphate to ribulose 5-phosphate. This chain is Ribose-5-phosphate isomerase A, found in Streptococcus agalactiae serotype V (strain ATCC BAA-611 / 2603 V/R).